The primary structure comprises 394 residues: Aromatic aminotransferase ISS1 (394 aa).

N-acetylglycine is present on G2. G38 provides a ligand contact to substrate. Pyridoxal 5'-phosphate-binding positions include Y64, 98-99, Y123, N176, Y207, and 230-232; these read AN and SFS. Positions 123 and 176 each coordinate substrate. Residue K233 is modified to N6-(pyridoxal phosphate)lysine. R241 is a pyridoxal 5'-phosphate binding site. The substrate site is built by R362 and R374.

Belongs to the class-I pyridoxal-phosphate-dependent aminotransferase family. As to quaternary structure, homodimer. It depends on pyridoxal 5'-phosphate as a cofactor. As to expression, expressed in roots, cotyledons and flowers.

The protein resides in the cytoplasm. It catalyses the reaction a 2-oxocarboxylate + L-methionine = 4-methylsulfanyl-2-oxobutanoate + an L-alpha-amino acid. The enzyme catalyses L-tryptophan + 2-oxoglutarate = indole-3-pyruvate + L-glutamate. It carries out the reaction L-tyrosine + 2-oxoglutarate = 3-(4-hydroxyphenyl)pyruvate + L-glutamate. Coordinates and prevents auxin (IAA) and ethylene biosynthesis, thus regulating auxin homeostasis in young seedlings. Shows aminotransferase activity with methionine; can use the ethylene biosynthetic intermediate L-methionine (L-Met) as an amino donor and the auxin biosynthetic intermediate, indole-3-pyruvic acid (3-IPA) as an amino acceptor to produce L-tryptophan (L-Trp) and 2-oxo-4-methylthiobutyric acid (KMBA). Can also use tryptophan (Trp), phenylalanine (Phe), and tyrosine (Tyr) as substrates. Regulates tryptophan (Trp) homeostasis and catabolism in mature plants. Also possibly involved in the metabolism of other aromatic amino acids and phenylpropanoid homeostasis. The polypeptide is Aromatic aminotransferase ISS1 (Arabidopsis thaliana (Mouse-ear cress)).